Reading from the N-terminus, the 420-residue chain is MYVAHLSLHDFRSYATAEVELSPGVTAFIGRNGQGKTNLVEAIDYLSRLSSHRVASDAPLVRAGADQAVVRAAVVRDGRTAVLEVELNPGRSNRARVNRSPLPRARDLVGLVRTVVFSPEDLTLVKGDPADRRRFLDDLLVLRVPRLAGVRADYDRVLRQRNTLLKTARKGGFARKGGFARKGGFAPLGPPEGRPEGPPEGRTGGSATSGPPSRSVALDTLAVWDAHLARTGAELLAERLALVEALRPYVGKAYETVARGATRDDAEIDYKPSFDLEGRTGRDDLVEALLAEVERRRGDELDRGVSLVGPHRDELLLTLGHGSPDSRLPVKGYASHGESWSFALALRLAAYDLLRADGDDPILILDDVFAELDTERRAQLADLVAGAEQVLVTAAVAADVPAGLAGARFAVGNGEVLREQ.

30–37 contributes to the ATP binding site; it reads GRNGQGKT. The segment at 175–214 is disordered; it reads RKGGFARKGGFAPLGPPEGRPEGPPEGRTGGSATSGPPSR.

Belongs to the RecF family.

Its subcellular location is the cytoplasm. Its function is as follows. The RecF protein is involved in DNA metabolism; it is required for DNA replication and normal SOS inducibility. RecF binds preferentially to single-stranded, linear DNA. It also seems to bind ATP. This chain is DNA replication and repair protein RecF, found in Nocardioides sp. (strain ATCC BAA-499 / JS614).